A 149-amino-acid chain; its full sequence is Protein-export protein SecB (149 aa).

The protein belongs to the SecB family. As to quaternary structure, homotetramer, a dimer of dimers. One homotetramer interacts with 1 SecA dimer.

Its subcellular location is the cytoplasm. One of the proteins required for the normal export of preproteins out of the cell cytoplasm. It is a molecular chaperone that binds to a subset of precursor proteins, maintaining them in a translocation-competent state. It also specifically binds to its receptor SecA. The polypeptide is Protein-export protein SecB (Hydrogenovibrio crunogenus (strain DSM 25203 / XCL-2) (Thiomicrospira crunogena)).